Reading from the N-terminus, the 395-residue chain is 1-deoxy-D-xylulose 5-phosphate reductoisomerase (395 aa).

Residues threonine 10, glycine 11, serine 12, isoleucine 13, asparagine 38, and asparagine 122 each contribute to the NADPH site. Lysine 123 provides a ligand contact to 1-deoxy-D-xylulose 5-phosphate. Residue glutamate 124 participates in NADPH binding. Aspartate 148 serves as a coordination point for Mn(2+). 1-deoxy-D-xylulose 5-phosphate-binding residues include serine 149, glutamate 150, serine 178, and histidine 200. A Mn(2+)-binding site is contributed by glutamate 150. Glycine 206 is a binding site for NADPH. 1-deoxy-D-xylulose 5-phosphate is bound by residues serine 213, asparagine 218, lysine 219, and glutamate 222. Glutamate 222 provides a ligand contact to Mn(2+).

It belongs to the DXR family. It depends on Mg(2+) as a cofactor. Mn(2+) serves as cofactor.

It carries out the reaction 2-C-methyl-D-erythritol 4-phosphate + NADP(+) = 1-deoxy-D-xylulose 5-phosphate + NADPH + H(+). It functions in the pathway isoprenoid biosynthesis; isopentenyl diphosphate biosynthesis via DXP pathway; isopentenyl diphosphate from 1-deoxy-D-xylulose 5-phosphate: step 1/6. Its function is as follows. Catalyzes the NADPH-dependent rearrangement and reduction of 1-deoxy-D-xylulose-5-phosphate (DXP) to 2-C-methyl-D-erythritol 4-phosphate (MEP). This is 1-deoxy-D-xylulose 5-phosphate reductoisomerase from Elusimicrobium minutum (strain Pei191).